Reading from the N-terminus, the 304-residue chain is Pseudouridine-5'-phosphate glycosidase (304 aa).

Glu-25 serves as the catalytic Proton donor. Positions 88 and 108 each coordinate substrate. Asp-140 is a Mn(2+) binding site. 142–144 serves as a coordination point for substrate; sequence SAD. Lys-161 serves as the catalytic Nucleophile.

The protein belongs to the pseudouridine-5'-phosphate glycosidase family. In terms of assembly, homotrimer. It depends on Mn(2+) as a cofactor.

It catalyses the reaction D-ribose 5-phosphate + uracil = psi-UMP + H2O. Its function is as follows. Catalyzes the reversible cleavage of pseudouridine 5'-phosphate (PsiMP) to ribose 5-phosphate and uracil. Functions biologically in the cleavage direction, as part of a pseudouridine degradation pathway. This Paracoccus denitrificans (strain Pd 1222) protein is Pseudouridine-5'-phosphate glycosidase.